Here is an 85-residue protein sequence, read N- to C-terminus: Large ribosomal subunit protein bL27 (85 aa).

The tract at residues 1 to 21 is disordered; the sequence is MAHKKGQGSTQNNRDSAGRRL.

The protein belongs to the bacterial ribosomal protein bL27 family.

The chain is Large ribosomal subunit protein bL27 from Wolinella succinogenes (strain ATCC 29543 / DSM 1740 / CCUG 13145 / JCM 31913 / LMG 7466 / NCTC 11488 / FDC 602W) (Vibrio succinogenes).